We begin with the raw amino-acid sequence, 764 residues long: DNA-binding protein SATB1 (764 aa).

Residues 1 to 15 show a composition bias toward basic and acidic residues; sequence MDHLNEATQGKEHSE. The segment at 1–56 is disordered; it reads MDHLNEATQGKEHSEMSNNVSDPKGPPAKIARLEQNGSPLGRGRLGSTGGKMQGVP. The short motif at 20–40 is the Nuclear localization signal element; that stretch reads VSDPKGPPAKIARLEQNGSPL. A compositionally biased stretch (gly residues) spans 43-52; sequence GRLGSTGGKM. Residue lysine 51 forms a Glycyl lysine isopeptide (Lys-Gly) (interchain with G-Cter in SUMO2) linkage. In terms of domain architecture, CMP spans 71-172; that stretch reads GTMLPVFCVV…VVTLKIQLHS (102 aa). Lysine 136 bears the N6-acetyllysine mark. A Protein interaction motif is present at residues 139–143; sequence PVPLS. The CUTL domain occupies 175-248; it reads KLEDLPPEQW…WYKHFKKTKD (74 aa). Serine 185 carries the phosphoserine modification. Positions 224–278 are nuclear matrix targeting sequence (NMTS); sequence YYANVSAAKCQEFGRWYKHFKKTKDMMVEMDSLSELSQQGANHVNFGQQPVPGNT. The short motif at 224 to 278 is the Nuclear matrix targeting sequence (NMTS) element; the sequence is YYANVSAAKCQEFGRWYKHFKKTKDMMVEMDSLSELSQQGANHVNFGQQPVPGNT. The span at 266–296 shows a compositional bias: polar residues; sequence HVNFGQQPVPGNTAEQPPSPAQLSHGSQPSV. Residues 266–307 are disordered; it reads HVNFGQQPVPGNTAEQPPSPAQLSHGSQPSVRTPLPNLHPGL. The segment at residues 361-448 is a DNA-binding region (CUT 1); the sequence is LEQQVSTNTE…ERDRIYQDER (88 aa). Residues glutamine 390, 400-410, and asparagine 425 each bind DNA; that span reads RTQGLLSEILR. Residues 450–474 form a disordered region; the sequence is RSLNAASAMGPAPLLSTPPSRPPQV. The CUT 2 DNA-binding region spans 484-571; that stretch reads NGKPENNTMN…ERDAIYEQES (88 aa). A disordered region spans residues 591–650; sequence QIQQQQQQQQQQQQQQQPPPPPPQPQPQPQAGPRLPPRQPTVASSAESDEENRQKTRPRT. Positions 593-606 are enriched in low complexity; it reads QQQQQQQQQQQQQQ. Residues 607-629 are compositionally biased toward pro residues; that stretch reads QPPPPPPQPQPQPQAGPRLPPRQ. At serine 638 the chain carries Phosphoserine. The segment at residues 646–705 is a DNA-binding region (homeobox); sequence TRPRTKISVEALGILQSFIQDVGLYPDEEAIQTLSAQLDLPKYTIIKFFQNQRYYLKHHG. Residue lysine 745 forms a Glycyl lysine isopeptide (Lys-Gly) (interchain with G-Cter in SUMO) linkage.

This sequence belongs to the CUT homeobox family. As to quaternary structure, interacts with PCAF. Interacts with sumoylated PML and HDAC1 Tat via the CMP domain. Also interacts with DYNLT3 and POLR2J2. Binds to EP300. Homodimer. Part of the nuclear protein complex gamma-globin promoter and enhancer binding factor (gamma-PE) composed at least of SATB1 and HOXB2. Interaction with CtBP1 when not acetylated stabilizes attachment to DNA and promotes transcription repression. Interacts with CUX1 (via DNA-binding domains); the interaction inhibits the attachment of both proteins to DNA. Post-translationally, sumoylated. Sumoylation promotes cleavage by caspases. Phosphorylated by PKC. Acetylated by PCAF. Phosphorylated form interacts with HDAC1, but unphosphorylated form interacts with PCAF. DNA binding properties are activated by phosphorylation and inactivated by acetylation. In opposition, gene expression is down-regulated by phosphorylation but up-regulated by acetylation. In terms of processing, cleaved at Asp-254 by caspase-3 and caspase-6 during T-cell apoptosis in thymus and during B-cell stimulation. The cleaved forms cannot dimerize and lose transcription regulation function because of impaired DNA and chromatin association. As to expression, expressed in the subventricular zone, rostral migratory stream and in the olfactory bulb (at protein level). Mainly expressed in thymus, spleen, and lymph nodes with a lower level observed in the brain.

It is found in the nucleus. Its subcellular location is the PML body. In terms of biological role, required for the switching of fetal globin species, and beta- and gamma-globin genes regulation during erythroid differentiation. Plays a role in chromatin organization and nuclear architecture during apoptosis. Crucial silencing factor contributing to the initiation of X inactivation mediated by Xist RNA that occurs during embryogenesis and in lymphoma. Binds to DNA at special AT-rich sequences, the consensus SATB1-binding sequence (CSBS), at nuclear matrix- or scaffold-associated regions. Thought to recognize the sugar-phosphate structure of double-stranded DNA. Transcriptional repressor controlling nuclear and viral gene expression in a phosphorylated and acetylated status-dependent manner, by binding to matrix attachment regions (MARs) of DNA and inducing a local chromatin-loop remodeling. Acts as a docking site for several chromatin remodeling enzymes and also by recruiting corepressors (HDACs) or coactivators (HATs) directly to promoters and enhancers. Modulates genes that are essential in the maturation of the immune T-cell CD8SP from thymocytes. Promotes neuronal differentiation of neural stem/progenitor cells in the adult subventricular zone, possibly by positively regulating the expression of NEUROD1. The sequence is that of DNA-binding protein SATB1 (Satb1) from Mus musculus (Mouse).